Reading from the N-terminus, the 333-residue chain is Transaldolase (333 aa).

Lys-135 acts as the Schiff-base intermediate with substrate in catalysis.

It belongs to the transaldolase family. Type 1 subfamily. In terms of assembly, homodimer.

The protein resides in the cytoplasm. It catalyses the reaction D-sedoheptulose 7-phosphate + D-glyceraldehyde 3-phosphate = D-erythrose 4-phosphate + beta-D-fructose 6-phosphate. The protein operates within carbohydrate degradation; pentose phosphate pathway; D-glyceraldehyde 3-phosphate and beta-D-fructose 6-phosphate from D-ribose 5-phosphate and D-xylulose 5-phosphate (non-oxidative stage): step 2/3. Functionally, transaldolase is important for the balance of metabolites in the pentose-phosphate pathway. The polypeptide is Transaldolase (Prochlorococcus marinus (strain MIT 9312)).